Here is a 150-residue protein sequence, read N- to C-terminus: SsrA-binding protein (150 aa).

A disordered region spans residues 129-150 (ETEKQRDWQREKSRIMKGGSKE).

It belongs to the SmpB family.

It is found in the cytoplasm. In terms of biological role, required for rescue of stalled ribosomes mediated by trans-translation. Binds to transfer-messenger RNA (tmRNA), required for stable association of tmRNA with ribosomes. tmRNA and SmpB together mimic tRNA shape, replacing the anticodon stem-loop with SmpB. tmRNA is encoded by the ssrA gene; the 2 termini fold to resemble tRNA(Ala) and it encodes a 'tag peptide', a short internal open reading frame. During trans-translation Ala-aminoacylated tmRNA acts like a tRNA, entering the A-site of stalled ribosomes, displacing the stalled mRNA. The ribosome then switches to translate the ORF on the tmRNA; the nascent peptide is terminated with the 'tag peptide' encoded by the tmRNA and targeted for degradation. The ribosome is freed to recommence translation, which seems to be the essential function of trans-translation. The chain is SsrA-binding protein from Cupriavidus pinatubonensis (strain JMP 134 / LMG 1197) (Cupriavidus necator (strain JMP 134)).